The sequence spans 310 residues: Ribosomal RNA small subunit methyltransferase H (310 aa).

S-adenosyl-L-methionine-binding positions include 32 to 34 (GGH), Asp-52, Phe-79, Asp-100, and Gln-107.

It belongs to the methyltransferase superfamily. RsmH family.

Its subcellular location is the cytoplasm. It catalyses the reaction cytidine(1402) in 16S rRNA + S-adenosyl-L-methionine = N(4)-methylcytidine(1402) in 16S rRNA + S-adenosyl-L-homocysteine + H(+). Specifically methylates the N4 position of cytidine in position 1402 (C1402) of 16S rRNA. In Bacillus cereus (strain G9842), this protein is Ribosomal RNA small subunit methyltransferase H.